The primary structure comprises 130 residues: Histone H2A type 1-D (130 aa).

The disordered stretch occupies residues Met-1–Ala-22. Ser-2 carries the N-acetylserine modification. Ser-2 is subject to Phosphoserine; by RPS6KA5. Arg-4 carries the post-translational modification Citrulline; alternate. Arg-4 bears the Symmetric dimethylarginine; by PRMT5; alternate mark. N6-(2-hydroxyisobutyryl)lysine; alternate is present on residues Lys-6 and Lys-10. Lys-6 bears the N6-acetyllysine; alternate mark. Over residues Gln-7 to Ser-19 the composition is skewed to basic residues. Residues Lys-10 and Lys-14 each carry the N6-(beta-hydroxybutyryl)lysine; alternate modification. An N6-lactoyllysine; alternate modification is found at Lys-10. Residue Lys-10 is modified to N6-succinyllysine; alternate. Residue Lys-14 forms a Glycyl lysine isopeptide (Lys-Gly) (interchain with G-Cter in ubiquitin); alternate linkage. Lys-16 is covalently cross-linked (Glycyl lysine isopeptide (Lys-Gly) (interchain with G-Cter in ubiquitin)). Position 37 is an N6-(2-hydroxyisobutyryl)lysine; alternate (Lys-37). Lys-37 is subject to N6-(beta-hydroxybutyryl)lysine; alternate. An N6-crotonyllysine; alternate modification is found at Lys-37. Residues Lys-75 and Lys-76 each carry the N6-(2-hydroxyisobutyryl)lysine modification. Lys-96 carries the N6-(2-hydroxyisobutyryl)lysine; alternate modification. Lys-96 carries the N6-(beta-hydroxybutyryl)lysine; alternate modification. Lys-96 carries the N6-succinyllysine; alternate modification. Position 96 is an N6-glutaryllysine; alternate (Lys-96). N6-glutaryllysine is present on Lys-100. Gln-105 bears the N5-methylglutamine mark. Lys-119 is subject to N6-(2-hydroxyisobutyryl)lysine; alternate. Position 119 is an N6-(beta-hydroxybutyryl)lysine; alternate (Lys-119). N6-crotonyllysine; alternate is present on residues Lys-119 and Lys-120. Residues Lys-119 and Lys-120 each carry the N6-glutaryllysine; alternate modification. Lys-120 participates in a covalent cross-link: Glycyl lysine isopeptide (Lys-Gly) (interchain with G-Cter in ubiquitin); alternate. Thr-121 is modified (phosphothreonine; by DCAF1). Lys-126 carries the post-translational modification N6-crotonyllysine; alternate. At Lys-126 the chain carries N6-glutaryllysine; alternate.

The protein belongs to the histone H2A family. As to quaternary structure, the nucleosome is a histone octamer containing two molecules each of H2A, H2B, H3 and H4 assembled in one H3-H4 heterotetramer and two H2A-H2B heterodimers. The octamer wraps approximately 147 bp of DNA. In terms of processing, deiminated on Arg-4 in granulocytes upon calcium entry. Post-translationally, monoubiquitination of Lys-120 (H2AK119Ub) by RING1, TRIM37 and RNF2/RING2 complex gives a specific tag for epigenetic transcriptional repression and participates in X chromosome inactivation of female mammals. It is involved in the initiation of both imprinted and random X inactivation. Ubiquitinated H2A is enriched in inactive X chromosome chromatin. Ubiquitination of H2A functions downstream of methylation of 'Lys-27' of histone H3 (H3K27me). H2AK119Ub by RNF2/RING2 can also be induced by ultraviolet and may be involved in DNA repair. Monoubiquitination of Lys-120 (H2AK119Ub) by TRIM37 may promote transformation of cells in a number of breast cancers. Following DNA double-strand breaks (DSBs), it is ubiquitinated through 'Lys-63' linkage of ubiquitin moieties by the E2 ligase UBE2N and the E3 ligases RNF8 and RNF168, leading to the recruitment of repair proteins to sites of DNA damage. Ubiquitination at Lys-14 and Lys-16 (H2AK13Ub and H2AK15Ub, respectively) in response to DNA damage is initiated by RNF168 that mediates monoubiquitination at these 2 sites, and 'Lys-63'-linked ubiquitin are then conjugated to monoubiquitin; RNF8 is able to extend 'Lys-63'-linked ubiquitin chains in vitro. Deubiquitinated by USP51 at Lys-14 and Lys-16 (H2AK13Ub and H2AK15Ub, respectively) after damaged DNA is repaired. H2AK119Ub and ionizing radiation-induced 'Lys-63'-linked ubiquitination (H2AK13Ub and H2AK15Ub) are distinct events. Phosphorylation on Ser-2 (H2AS1ph) is enhanced during mitosis. Phosphorylation on Ser-2 by RPS6KA5/MSK1 directly represses transcription. Acetylation of H3 inhibits Ser-2 phosphorylation by RPS6KA5/MSK1. Phosphorylation at Thr-121 (H2AT120ph) by DCAF1 is present in the regulatory region of many tumor suppresor genes and down-regulates their transcription. In terms of processing, glutamine methylation at Gln-105 (H2AQ104me) by FBL is specifically dedicated to polymerase I. It is present at 35S ribosomal DNA locus and impairs binding of the FACT complex. Post-translationally, symmetric dimethylation on Arg-4 by the PRDM1/PRMT5 complex may play a crucial role in the germ-cell lineage. Crotonylation (Kcr) is specifically present in male germ cells and marks testis-specific genes in post-meiotic cells, including X-linked genes that escape sex chromosome inactivation in haploid cells. Crotonylation marks active promoters and enhancers and confers resistance to transcriptional repressors. It is also associated with post-meiotically activated genes on autosomes. In terms of processing, lactylated in macrophages by EP300/P300 by using lactoyl-CoA directly derived from endogenous or exogenous lactate, leading to stimulates gene transcription.

The protein resides in the nucleus. Its subcellular location is the chromosome. In terms of biological role, core component of nucleosome. Nucleosomes wrap and compact DNA into chromatin, limiting DNA accessibility to the cellular machineries which require DNA as a template. Histones thereby play a central role in transcription regulation, DNA repair, DNA replication and chromosomal stability. DNA accessibility is regulated via a complex set of post-translational modifications of histones, also called histone code, and nucleosome remodeling. This Homo sapiens (Human) protein is Histone H2A type 1-D.